The chain runs to 61 residues: Large ribosomal subunit protein bL32 (61 aa).

Residues 1–20 (MAVQKSKPSRAKRGKRRSHD) form a disordered region. Residues 7 to 19 (KPSRAKRGKRRSH) show a composition bias toward basic residues.

Belongs to the bacterial ribosomal protein bL32 family.

The polypeptide is Large ribosomal subunit protein bL32 (Buchnera aphidicola subsp. Cinara cedri (strain Cc)).